The chain runs to 222 residues: Cytidylate kinase (222 aa).

Residue 11 to 19 participates in ATP binding; sequence GPSGSGKST.

This sequence belongs to the cytidylate kinase family. Type 1 subfamily.

Its subcellular location is the cytoplasm. It carries out the reaction CMP + ATP = CDP + ADP. The catalysed reaction is dCMP + ATP = dCDP + ADP. In Ureaplasma urealyticum serovar 10 (strain ATCC 33699 / Western), this protein is Cytidylate kinase.